Consider the following 784-residue polypeptide: Protein DBF4 homolog B (784 aa).

Positions 27–117 constitute a BRCT domain; the sequence is CREITFAGKS…SRGKQLLKKV (91 aa). The segment at 222-243 is disordered; it reads TVKKKDPGDQEEEEGQRSQKPQ. The segment at 244-293 adopts a DBF4-type zinc-finger fold; that stretch reads ARKRKGYCECCEETFDTLSEHLVGEHHFRFVSNPLSYKMIDDLAAQLTCD. Zn(2+)-binding residues include cysteine 251, cysteine 254, histidine 264, and histidine 270. Disordered stretches follow at residues 299–332, 348–368, and 495–529; these read FGSPTSPEAERSSQNEDWDLDLAPGEAEPAGNEG, HADCEDQGAPAYLRDGGAEEP, and TVGSQGDVTSHSAANKPHTENCPVDSTGDRHAQPA. Polar residues predominate over residues 498 to 507; it reads SQGDVTSHSA.

Forms a complex with cdc7. Phosphorylated. Stably phosphorylated throughout the cell cycle.

It localises to the nucleus. In terms of biological role, regulatory subunit for cdc7 which activates its kinase activity thereby playing a central role in DNA replication and cell proliferation. Specifically required during the initiation of DNA replication in egg and during early embryonic development. The complex cdc7-dbf4b phosphorylates mcm2 and mcm4 subunits and is required for cdc45 loading. The polypeptide is Protein DBF4 homolog B (dbf4b) (Xenopus laevis (African clawed frog)).